We begin with the raw amino-acid sequence, 1507 residues long: Protein similar (1507 aa).

The segment at 1–85 is disordered; sequence MVSLIDTIEA…KSRDAARCRR (85 aa). The segment covering 26–49 has biased composition (low complexity); the sequence is SASSSSCSSSFSSSPPSSSVGSPS. Basic and acidic residues predominate over residues 72 to 85; that stretch reads KRKEKSRDAARCRR. A bHLH domain is found at 72-125; sequence KRKEKSRDAARCRRSKETEIFMELSAALPLKTDDVNQLDKASVMRITIAFLKIR. PAS domains are found at residues 167–240 and 307–377; these read NGAE…LAQK and PHPS…LSKG. The PAC domain maps to 381–422; it reads TSRYRFLGKYGGYCWILSQATIVYDKLKPQSVVCVNYVISNL. Disordered stretches follow at residues 433–459, 541–588, 706–832, and 900–951; these read QQTAASEQKEQHHQAAETEKEPEKAAD, HSPG…PPPT, TCST…CSPN, and YAGN…QAAV. Basic and acidic residues predominate over residues 439–459; that stretch reads EQKEQHHQAAETEKEPEKAAD. The segment covering 548-559 has biased composition (polar residues); it reads ITAQLLSGSSSG. Residues 578-588 are compositionally biased toward pro residues; the sequence is SPAPPLTPPPT. The interval 692-863 is ODD; it reads TCLLPEDINS…IDDDMPLLTE (172 aa). Polar residues predominate over residues 706-717; sequence TCSTTASGQHYQ. 2 stretches are compositionally biased toward low complexity: residues 718–745 and 754–777; these read SPSSSSTSAPSNTSSSNNSYANSPLSPL and SNPSHQQQQQHHNQQQQQQQQQQH. Over residues 803-818 the composition is skewed to polar residues; that stretch reads DTSCSQHLHSPSITSK. Composition is skewed to low complexity over residues 823–832, 907–918, and 926–951; these read SSLPSLCSPN, QQQQQQPQLQQQ, and SSPASTVSSLSPSPVQQHHQQQQAAV. Residues 880 to 908 adopt a coiled-coil conformation; sequence KEIDAIQQQLQQLQQQHHQQYAGNTGYQQ. 2 coiled-coil regions span residues 982-1054 and 1110-1162; these read AEEC…YDVQ and QLLQ…QLQQ. Disordered stretches follow at residues 1204–1228, 1251–1287, and 1356–1460; these read PQQQQHGNKRHLNSATGAGNPVESK, KDPAQQQTQAAKRAGSERWQLSAESKQQKQQQQQSNS, and FGGS…KTSI. Positions 1413 to 1423 are enriched in polar residues; sequence SSTSNSTNQAE.

As to quaternary structure, efficient DNA binding requires dimerization with another bHLH protein. Interacts with Vhl. As to expression, ubiquitously expressed in the embryo.

Its subcellular location is the cytoplasm. It localises to the nucleus. In terms of biological role, functions as a transcriptional regulator of the adaptive response to hypoxia. Binds to core DNA sequence 5'-[AG]CGTG-3' within the hypoxia response element (HRE) of target gene promoters. This Drosophila melanogaster (Fruit fly) protein is Protein similar (sima).